A 352-amino-acid polypeptide reads, in one-letter code: MVFRIASSPYTHNQRQTSRIMLLVLLAAVPGIAAQLRFFGWGTLVQILLASVSALLAEALVLKLRKQSVAATLKDNSALLTGLLLAVSIPPLAPWWMVVLGTVFAVIIAKQLYGGLGQNPFNPAMIGYVVLLISFPVQMTSWLPPHEIAVNIPGFIDAIQVIFSGHTASGGDMNTLRLGIDGISQATPLDTFKTSVRAGHSVEQIMQYPIYSGILAGAGWQWVNLAWLAGGVWLLWQKAIRWHIPLSFLVTLALCATLGWLFSPETLAAPQIHLLSGATMLGAFFILTDPVTASTTNRGRLMFGALAGLLVWLIRSFGGYPDGVAFAVLLANITVPLIDYYTRPRVYGHRKG.

Helical transmembrane passes span isoleucine 20–glycine 40, glycine 42–leucine 62, alanine 78–alanine 109, proline 123–leucine 143, and isoleucine 148–alanine 168. FMN phosphoryl threonine is present on threonine 187. 4 consecutive transmembrane segments (helical) span residues isoleucine 214–leucine 234, tryptophan 242–phenylalanine 262, leucine 267–leucine 287, and leucine 301–glycine 318.

The protein belongs to the NqrB/RnfD family. As to quaternary structure, the complex is composed of six subunits: RsxA, RsxB, RsxC, RsxD, RsxE and RsxG. Requires FMN as cofactor.

It localises to the cell inner membrane. Part of a membrane-bound complex that couples electron transfer with translocation of ions across the membrane. Required to maintain the reduced state of SoxR. This Shigella flexneri protein is Ion-translocating oxidoreductase complex subunit D.